Reading from the N-terminus, the 148-residue chain is Cytochrome c-552 (148 aa).

The signal sequence occupies residues 1-17 (MKRTLMAFLLLGGLALA). Gln18 is subject to Pyrrolidone carboxylic acid. Residues Cys28, Cys31, His32, and Met86 each contribute to the heme c site.

In terms of processing, binds 1 heme c group covalently per subunit.

This monoheme basic protein appears to function as an electron donor to cytochrome oxidase in T.thermophilus. The polypeptide is Cytochrome c-552 (cycA) (Thermus thermophilus (strain ATCC 27634 / DSM 579 / HB8)).